A 1256-amino-acid polypeptide reads, in one-letter code: MLFPLQVAAVTSSVRDDPLEHCVSPRTRARSPEICKMADNLDEFIEEQKARLAEDKAELESDPPYMEMKGKLSAKLSENSKILISMAKENIPPNSQQTRGSLGIDYGLSLPLGEDYERKKHKLKEELRQDYRRYLTQGITQGKRKKNFLSTSETDPSTLGVSLPIGERLSAKERLKLERNKEYNQFLRGKEESSEKFRQVEKSTEPKSQRNKKPIGQVKPDLTSQIQTSCENSEGPRKDVLTPSEAYEELLNQRRLEEDRYRQLDDEIELRNRRIIKKANEEVGISNLKHQRFASKAGIPDRRFHRFNEDRVFDRRYHRPDQDPEVSEEMDERFRYESDFDRRLSRVYTNDRMHRNKRGNMPPMEHDGDVIEQSNIRISSAENKSAPDNETSKSANQDTCSPFAGMLFGGEDRELIQRRKEKYRLELLEQMAEQQRNKRREKDLELRVAASGAQDPEKSPDRLKQFSVAPRHFEEMIPPERPRIAFQTPLPPLSAPSVPPIPSVHPVPSQNEDLRSGLSSALGEMVSPRIAPLPPPPLLPPLATNYRTPYDDAYYFYGSRNTFDPSLAYYGSGMMGVQPAAYVSAPVTHQLAQPVVNTVGQNELKITSDQVINSGLIFEDKPKPSKQSLQSYQEALQQQIREREERRKKEREEKEEYEAKLEAEMRTYNPWGKGGGGAPLRDAKGNLITDLNRMHRQNIDAYHNPDARTYEDKRAVVSLDPNLATSNAENLEDAANKSSGHMQTQSSPFARGNVFGEPPTELQIKQQELYKNFLRFQIEEKKQREEAERERLRIAEEKEERRLAEQRARIQQEYEEEQEKKREKEEEQRLKNEEHIRLAEERQKEAERKKKEEEEKYNLQLQHYCERDNLIGEETKHMRQPSPIVPALQNKIASKLQRPPSVDSIIRSFIHESSMSRAQSPPVPARKNQLRAEEEKKNVIMELSEMRKQLRSEERRLQERLLHMDSDDEIPIRKKERNPMDIFDMARHRLQAPVRRQSPKGLDAATFQNVHDFNELKDRDSETRVDLKFMYLDPPRDHHTLEIQQQALLREQQKRLNRIKMQEGAKVDLDAIPSAKVREQRMPRDDTSDFLKNSLLESDSAFIGAYGETYPAIEDDVLPPPSQLPSARERRRNKWKGLDIDSSRPNVAPDGLSLKSISSVNVDELRVRNEERMRRLNEFHNKPINTDDESSLVDPDDIMKHIGDDGSNSVATEPWLRPGTSETLKRFMAEQLNQEQQQIPGKPGTFTWQGLSTAHG.

2 coiled-coil regions span residues alanine 38–aspartate 62 and glutamate 114–leucine 135. Residues glycine 189–serine 208 show a composition bias toward basic and acidic residues. 2 disordered regions span residues glycine 189 to serine 244 and alanine 381 to phenylalanine 403. The span at leucine 222 to asparagine 232 shows a compositional bias: polar residues. Serine 244 bears the Phosphoserine mark. Positions serine 244–leucine 270 form a coiled coil. A coiled-coil region spans residues glutamine 417–alanine 449. 2 positions are modified to phosphoserine: serine 459 and serine 527. Residues serine 625–asparagine 669 adopt a coiled-coil conformation. Disordered regions lie at residues alanine 735–glutamate 757 and glutamate 813–glutamate 853. Positions asparagine 736–proline 748 are enriched in polar residues. Phosphoserine occurs at positions 901 and 920. Residues serine 913–alanine 932 are disordered. Residues alanine 925–methionine 964 are a coiled coil. Serine 966 carries the phosphoserine modification. Disordered regions lie at residues glutamate 1114 to valine 1147 and leucine 1232 to glycine 1256. Polar residues predominate over residues phenylalanine 1246–glycine 1256.

Interacts with PLEKHG6. Interacts with ARMC9, TOGARAM1, CCDC66, CEP104 and CEP290. In terms of processing, phosphorylated. Phosphorylation increases in colcemide-treated cells. Expressed in adult and fetal brain with enrichment in the cerebellum. Detected in testis.

It is found in the cytoplasm. The protein resides in the cytoskeleton. Its subcellular location is the microtubule organizing center. The protein localises to the centrosome. It localises to the spindle. It is found in the spindle pole. The protein resides in the cell projection. Its subcellular location is the cilium. Functionally, may play a role in cell-cycle-dependent microtubule organization. In Homo sapiens (Human), this protein is Centrosome and spindle pole-associated protein 1 (CSPP1).